We begin with the raw amino-acid sequence, 471 residues long: Pancreatic lipase-related protein 2 (471 aa).

An N-terminal signal peptide occupies residues 1-17 (MLPSWTIGLLLLATVRG). An intrachain disulfide couples Cys-21 to Cys-27. An N-linked (GlcNAc...) asparagine glycan is attached at Asn-71. The tract at residues 93–105 (IHGFIDKGEDSWP) is required for galactolipase activity. Cys-109 and Cys-120 form a disulfide bridge. The Nucleophile role is filled by Ser-171. The active-site Charge relay system is Asp-195. The Ca(2+) site is built by Glu-206, Arg-209, Asp-211, and Asp-214. A disulfide bridge links Cys-256 with Cys-280. The required for galactolipase activity stretch occupies residues 257–279 (QKNTLSTIVDVDGIWEGIEDFAA). His-282 functions as the Charge relay system in the catalytic mechanism. Intrachain disulfides connect Cys-304–Cys-317 and Cys-320–Cys-325. The N-linked (GlcNAc...) asparagine glycan is linked to Asn-355. The PLAT domain occupies 359-471 (WRYRVSVTLA…ENILQTLNPC (113 aa)). A disulfide bridge connects residues Cys-455 and Cys-471.

Belongs to the AB hydrolase superfamily. Lipase family.

It localises to the secreted. Its subcellular location is the zymogen granule membrane. It is found in the cell projection. The protein resides in the neuron projection. The catalysed reaction is a triacylglycerol + H2O = a diacylglycerol + a fatty acid + H(+). It catalyses the reaction a 1,2-diacyl-3-O-(beta-D-galactosyl)-sn-glycerol + 2 H2O = 3-beta-D-galactosyl-sn-glycerol + 2 a fatty acid + 2 H(+). It carries out the reaction 1,2,3-tri-(9Z-octadecenoyl)-glycerol + H2O = di-(9Z)-octadecenoylglycerol + (9Z)-octadecenoate + H(+). The enzyme catalyses di-(9Z)-octadecenoylglycerol + H2O = (9Z-octadecenoyl)-glycerol + (9Z)-octadecenoate + H(+). The catalysed reaction is (9Z-octadecenoyl)-glycerol + H2O = glycerol + (9Z)-octadecenoate + H(+). It catalyses the reaction 1-(9Z-octadecenoyl)-glycerol + H2O = glycerol + (9Z)-octadecenoate + H(+). It carries out the reaction 1,2,3-tripropanoylglycerol + H2O = dipropanoylglycerol + propanoate + H(+). The enzyme catalyses 1,2,3-tributanoylglycerol + H2O = dibutanoylglycerol + butanoate + H(+). The catalysed reaction is 1,2,3-trioctanoylglycerol + H2O = dioctanoylglycerol + octanoate + H(+). It catalyses the reaction 1,2-didecanoylglycerol + H2O = decanoylglycerol + decanoate + H(+). It carries out the reaction long chain 1,2-diacyl-3-O-beta-D-galactosyl-sn-glycerol + H2O = long chain acyl-3-O-beta-D-galactosyl-sn-glycerol + a fatty acid + H(+). The enzyme catalyses 1,2-dioctanoyl-3-O-beta-D-galactosyl-sn-glycerol + H2O = octanoyl-3-(beta-D-galactosyl)-sn-glycerol + octanoate + H(+). The catalysed reaction is 1,2-didodecanoyl-3-beta-D-galactosyl-sn-glycerol + H2O = dodecanoyl-3-beta-D-galactosyl-sn-glycerol + dodecanoate + H(+). It catalyses the reaction 1-beta-D-galactosyl-2,3-didodecanoyl-sn-glycerol + H2O = 1-beta-D-galactosyl-dodecanoyl-sn-glycerol + dodecanoate + H(+). It carries out the reaction a 1,2-diacyl-3-O-[alpha-D-galactosyl-(1-&gt;6)-beta-D-galactosyl]-sn-glycerol + H2O = acyl-3-O-[alpha-D-galactosyl-(1-&gt;6)-beta-D-galactosyl]-sn-glycerol + a fatty acid + H(+). The enzyme catalyses long chain 1,2-diacyl-3-O-[alpha-D-galactosyl-(1-&gt;6)-beta-D-galactosyl]-sn-glycerol + H2O = long chain acyl-3-O-[alpha-D-galactosyl-(1-&gt;6)-beta-D-galactosyl]-sn-glycerol + a fatty acid + H(+). The catalysed reaction is 1,2-dioctanoyl-3-O-[alpha-D-galactosyl-(1-&gt;6)-beta-D-galactosyl]-sn-glycerol + H2O = octanoyl-3-O-[alpha-D-galactosyl-(1-&gt;6)-beta-D-galactosyl]-sn-glycerol + octanoate + H(+). It catalyses the reaction 1,2-didodecanoyl-3-O-[alpha-D-galactosyl-(1-&gt;6)-beta-D-galactosyl]-sn-glycerol + H2O = dodecanoyl-3-O-[alpha-D-galactosyl-(1-&gt;6)-beta-D-galactosyl]-sn-glycerol + dodecanoate + H(+). It carries out the reaction a 1,2-diacyl-sn-glycero-3-phosphocholine + H2O = a monoacyl-sn-glycero-3-phosphocholine + a fatty acid + H(+). The protein operates within glycerolipid metabolism; triacylglycerol degradation. Its pathway is glycolipid metabolism. With respect to regulation, up-regulated by CLPS in the presence of increasing concentrations of bile salts. Its function is as follows. Lipase that primarily hydrolyzes triglycerides and galactosylglycerides. In neonates, may play a major role in pancreatic digestion of dietary fats such as milk fat globules enriched in long-chain triglycerides. Hydrolyzes short-, medium- and long-chain fatty acyls in triglycerides without apparent positional specificity. Can completely deacylate triacylglycerols. When the liver matures and bile salt synthesis increases, likely functions mainly as a galactolipase and monoacylglycerol lipase. Hydrolyzes monogalactosyldiglycerols (MGDG) and digalactosyldiacylglycerols (DGDG) present in a plant-based diet, releasing long-chain polyunsaturated fatty acids. Hydrolyzes medium- and long-chain fatty acyls in galactolipids. May act together with LIPF to hydrolyze partially digested triglycerides. Hydrolyzes long-chain monoglycerides with high efficiency. In cytotoxic T cells, contributes to perforin-dependent cell lysis, but is unlikely to mediate direct cytotoxicity. Also has low phospholipase activity. In neurons, required for the localization of the phospholipid 1-oleoyl-2-palmitoyl-PC (OPPC) to neurite tips through acyl chain remodeling of membrane phospholipids. The resulting OPPC-rich lipid membrane domain recruits the t-SNARE protein STX4 by selectively interacting with the STX4 transmembrane domain and this promotes surface expression of the dopamine transporter SLC6A3/DAT at neurite tips by facilitating fusion of SLC6A3-containing transport vesicles with the plasma membrane. In Sus scrofa (Pig), this protein is Pancreatic lipase-related protein 2 (PNLIPRP2).